The sequence spans 740 residues: Arf-GAP with coiled-coil, ANK repeat and PH domain-containing protein 1 (740 aa).

A BAR domain is found at 1–226; it reads MTVKLDFEEC…RKELGTQLHN (226 aa). Residues 1 to 382 are required for formation of endosomal tubules when overexpressed with PIP5K1C; it reads MTVKLDFEEC…RGPGQVSGYH (382 aa). A PH domain is found at 265-360; the sequence is GLVMEGHLFK…WVSAVQSSIA (96 aa). One can recognise an Arf-GAP domain in the interval 405-527; it reads GQVAAQVQSV…KFLTKLPEIR (123 aa). Residues 405–740 are required for interaction with GULP1; it reads GQVAAQVQSV…SRRSHDLHTL (336 aa). The C4-type zinc finger occupies 420–443; that stretch reads CCDCREPAPEWASINLGVTLCIQC. Y485 is subject to 3'-nitrotyrosine. The interval 525 to 562 is disordered; the sequence is EIRGRRGGRGPPRGHPPVPPKPPIRPHSGIVRSKSECP. The interval 525–566 is prevents interaction with ITGB1 when S-554 is not phosphorylated; that stretch reads EIRGRRGGRGPPRGHPPVPPKPPIRPHSGIVRSKSECPSDDM. The span at 537–549 shows a compositional bias: pro residues; sequence RGHPPVPPKPPIR. ANK repeat units follow at residues 606-635, 639-668, and 672-702; these read GNAT…NVNQ, AGRG…DLGA, and EGRD…EAEA.

In terms of assembly, banana-shaped homodimer laterally assembling into tetramers, the tetramers further pack helically onto the membrane. Interacts with GTP-bound ARF6. Interacts with third cytoplasmic loop of SLC2A4/GLUT4. Interacts with CLTC. Interacts with GULP1. Forms a complex with GDP-bound ARF6 and GULP1. Interacts with ITGB1; required for ITGB1 recycling.

The protein localises to the recycling endosome membrane. GAP activity stimulated by phosphatidylinositol 4,5-bisphosphate (PIP2) and phosphatidic acid. Functionally, GTPase-activating protein (GAP) for ADP ribosylation factor 6 (ARF6) required for clathrin-dependent export of proteins from recycling endosomes to trans-Golgi network and cell surface. Required for regulated export of ITGB1 from recycling endosomes to the cell surface and ITGB1-dependent cell migration. The sequence is that of Arf-GAP with coiled-coil, ANK repeat and PH domain-containing protein 1 (Acap1) from Mus musculus (Mouse).